The sequence spans 202 residues: MVAPHEDPEDHVAPAAQRVRAGTLLLANTDLLEPTFRRSVIYIVEHNDGGTLGVVLNRPSETAVYNVLPQWAKLAAKPKTMFIGGPVKRDAALCLAVLRVGADPEGVPGLRHVAGRLVMVDLDADPEVLAAAVEGVRIYAGYSGWTIGQLEGEIERDDWIVLSALPSDVLVGPRADLWGQVLRRQPLPLSLLATHPIDLSRN.

This sequence belongs to the UPF0301 (AlgH) family.

The sequence is that of UPF0301 protein BCG_0069 from Mycobacterium bovis (strain BCG / Pasteur 1173P2).